A 767-amino-acid chain; its full sequence is Integrin beta-8 (767 aa).

Positions 1-21 (MCGSALAFLTAALLSLHNCQR) are cleaved as a signal peptide. At 22-681 (GPALVLGAAW…SECLSGPSYL (660 aa)) the chain is on the extracellular side. The region spanning 46 to 95 (RCGSANVVSCARCLQLGPECGWCVQEDFVSGGSGSERCDTVSSLISKGCP) is the PSI domain. 25 disulfide bridges follow: cysteine 47–cysteine 65, cysteine 55–cysteine 469, cysteine 58–cysteine 83, cysteine 68–cysteine 94, cysteine 211–cysteine 218, cysteine 266–cysteine 307, cysteine 407–cysteine 419, cysteine 439–cysteine 467, cysteine 471–cysteine 490, cysteine 471–cysteine 493, cysteine 481–cysteine 493, cysteine 498–cysteine 527, cysteine 510–cysteine 525, cysteine 519–cysteine 530, cysteine 532–cysteine 545, cysteine 552–cysteine 566, cysteine 560–cysteine 571, cysteine 573–cysteine 582, cysteine 584–cysteine 608, cysteine 592–cysteine 606, cysteine 600–cysteine 611, cysteine 613–cysteine 623, cysteine 626–cysteine 629, cysteine 633–cysteine 660, and cysteine 639–cysteine 656. Residues 146–384 (PVDLYYLVDV…NLVVEAYKKI (239 aa)) form the VWFA domain. Positions 154 and 156 each coordinate Mg(2+). Aspartate 193 provides a ligand contact to Ca(2+). The N-linked (GlcNAc...) asparagine glycan is linked to asparagine 233. Ca(2+) contacts are provided by asparagine 249, aspartate 251, proline 253, and glutamate 254. A Mg(2+)-binding site is contributed by glutamate 254. N-linked (GlcNAc...) asparagine glycosylation occurs at asparagine 402. Asparagine 421, asparagine 431, and asparagine 456 each carry an N-linked (GlcNAc...) asparagine glycan. I-EGF domains lie at 471–494 (CENH…PQCD), 498–546 (CHFD…QYCE), 547–583 (KDDF…DRCQ), and 584–624 (CPSA…RLCE). Residue asparagine 647 is glycosylated (N-linked (GlcNAc...) asparagine). The chain crosses the membrane as a helical span at residues 682 to 702 (RIFFIIFIVTFLIGLLKVLII). Topologically, residues 703 to 767 (RQVILQWNNN…NAQEAFRCNF (65 aa)) are cytoplasmic.

The protein belongs to the integrin beta chain family. As to quaternary structure, heterodimer of an alpha and a beta subunit. Beta-8 (ITGB8) associates with alpha-V (ITGAV) to form ITGAV:ITGB8. ITGAV:ITGB8 interacts with TGFB1.

The protein resides in the cell membrane. In terms of biological role, integrin alpha-V:beta-8 (ITGAV:ITGB8) is a receptor for fibronectin. It recognizes the sequence R-G-D in its ligands. Integrin alpha-V:beta-6 (ITGAV:ITGB6) mediates R-G-D-dependent release of transforming growth factor beta-1 (TGF-beta-1) from regulatory Latency-associated peptide (LAP), thereby playing a key role in TGF-beta-1 activation on the surface of activated regulatory T-cells (Tregs). Required during vasculogenesis. This Mus musculus (Mouse) protein is Integrin beta-8.